A 301-amino-acid polypeptide reads, in one-letter code: D-alanine--D-alanine ligase A (301 aa).

The region spanning 99–293 (KRILAFGNVR…FEELLDTIIE (195 aa)) is the ATP-grasp domain. 126 to 181 (IENLGYPVFVKPNNGGSSVATTLVESKEAVKDAVLEALKYDTEVMIEEYIKGDEIT) contributes to the ATP binding site. 3 residues coordinate Mg(2+): Asp-248, Glu-260, and Asn-262.

It belongs to the D-alanine--D-alanine ligase family. Mg(2+) serves as cofactor. Mn(2+) is required as a cofactor.

It is found in the cytoplasm. It catalyses the reaction 2 D-alanine + ATP = D-alanyl-D-alanine + ADP + phosphate + H(+). It functions in the pathway cell wall biogenesis; peptidoglycan biosynthesis. Cell wall formation. This Clostridium perfringens (strain 13 / Type A) protein is D-alanine--D-alanine ligase A.